A 752-amino-acid chain; its full sequence is Microtubule-associated protein tau (752 aa).

Positions 1–567 (MAEPRQEFDT…PVPMPDLKNV (567 aa)) are disordered. Ala-2 carries the N-acetylalanine modification. A Phosphotyrosine modification is found at Tyr-18. Lys-33 is covalently cross-linked (Glycyl lysine isopeptide (Lys-Gly) (interchain with G-Cter in ubiquitin)). A phosphoserine mark is found at Ser-35 and Ser-50. A compositionally biased stretch (polar residues) spans 50–60 (SETSDAKSTPT). Thr-58, Thr-60, and Thr-100 each carry phosphothreonine. Over residues 142–151 (SDWTHQQVPS) the composition is skewed to polar residues. The segment covering 173–182 (RPEDVERSHP) has biased composition (basic and acidic residues). Phosphoserine is present on residues Ser-191 and Ser-204. Basic and acidic residues predominate over residues 192–204 (PQKEAWGKDRLGS). The span at 205–218 (EEEVDEDITMDESS) shows a compositional bias: acidic residues. Over residues 219-229 (QESPPSQASLA) the composition is skewed to low complexity. Over residues 233–252 (ATPQARSVSASGVSGETTSI) the composition is skewed to polar residues. Composition is skewed to basic and acidic residues over residues 289 to 313 (EEGH…KEQD) and 374 to 385 (SKDRTGNDEKKA). 2 stretches are compositionally biased toward polar residues: residues 387–400 (TSTP…SNRP) and 432–446 (KYVS…SPGT). The residue at position 464 (Thr-464) is a Phosphothreonine. Arg-466 bears the Omega-N-methylarginine mark. Lys-474 carries the post-translational modification N6,N6-dimethyllysine; alternate. Residue Lys-474 is modified to N6-acetyllysine; alternate. Phosphothreonine is present on residues Thr-480, Thr-486, and Thr-487. Ser-489 is subject to Phosphoserine. At Thr-492 the chain carries Phosphothreonine. 3 positions are modified to phosphoserine: Ser-496, Ser-502, and Ser-506. The span at 498–525 (EPPKSGERSGYSSPGSPGTPGSRSRTPS) shows a compositional bias: low complexity. Position 508 is a phosphotyrosine (Tyr-508). Phosphoserine is present on residues Ser-509 and Ser-510. Position 513 is a phosphoserine; by CK1, PDPK1 and TTBK1 (Ser-513). A phosphothreonine mark is found at Thr-516 and Thr-523. Phosphoserine is present on Ser-525. At Thr-528 the chain carries Phosphothreonine. Position 536 is an N6-acetyllysine (Lys-536). The residue at position 542 (Thr-542) is a Phosphothreonine. A phosphoserine mark is found at Ser-546 and Ser-548. Tau/MAP repeat units follow at residues 555–585 (QTAP…GGGK), 586–616 (VQII…GGGS), 617–647 (VHIV…GGGQ), and 648–679 (VEVK…GGGN). A Glycyl lysine isopeptide (Lys-Gly) (interchain with G-Cter in ubiquitin) cross-link involves residue Lys-565. N6-acetyllysine; alternate is present on Lys-570. An N6-methyllysine; alternate modification is found at Lys-570. Residue Lys-570 forms a Glycyl lysine isopeptide (Lys-Gly) (interchain with G-Cter in ubiquitin); alternate linkage. Residue Ser-573 is modified to Phosphoserine. A Glycyl lysine isopeptide (Lys-Gly) (interchain with G-Cter in ubiquitin) cross-link involves residue Lys-578. Lys-592 is subject to N6-acetyllysine; alternate. Residue Lys-592 forms a Glycyl lysine isopeptide (Lys-Gly) (interchain with G-Cter in ubiquitin); alternate linkage. Phosphoserine is present on residues Ser-596 and Ser-600. Lys-601 is subject to N6-acetyllysine. Cys-602 and Cys-633 are joined by a disulfide. Ser-604 bears the Phosphoserine mark. Lys-609 is subject to N6-acetyllysine; alternate. Lys-609 is covalently cross-linked (Glycyl lysine isopeptide (Lys-Gly) (interchain with G-Cter in ubiquitin); alternate). Ser-616 is modified (phosphoserine). N6,N6-dimethyllysine; alternate is present on Lys-622. Residues Lys-622, Lys-628, and Lys-632 each carry the N6-acetyllysine; alternate modification. Residues Lys-622, Lys-628, and Lys-632 each participate in a glycyl lysine isopeptide (Lys-Gly) (interchain with G-Cter in ubiquitin); alternate cross-link. Ser-635 is subject to Phosphoserine. N6-acetyllysine; alternate is present on residues Lys-642, Lys-654, and Lys-658. Glycyl lysine isopeptide (Lys-Gly) (interchain with G-Cter in ubiquitin); alternate cross-links involve residues Lys-642, Lys-654, and Lys-658. An Omega-N-methylarginine modification is found at Arg-660. Ser-663 bears the Phosphoserine mark. A Glycyl lysine isopeptide (Lys-Gly) (interchain with G-Cter in ubiquitin) cross-link involves residue Lys-664. Residue Ser-667 is modified to Phosphoserine. Lys-680 carries the N6-acetyllysine; alternate modification. Residue Lys-680 forms a Glycyl lysine isopeptide (Lys-Gly) (interchain with G-Cter in ubiquitin); alternate linkage. Residue Lys-686 forms a Glycyl lysine isopeptide (Lys-Gly) (interchain with G-Cter in ubiquitin) linkage. An N6-acetyllysine; alternate modification is found at Lys-696. Lys-696 participates in a covalent cross-link: Glycyl lysine isopeptide (Lys-Gly) (interchain with G-Cter in ubiquitin); alternate. Residue Tyr-705 is modified to Phosphotyrosine. Residue Ser-707 is modified to Phosphoserine; by CK1 and PDPK1. Position 711 is a phosphoserine (Ser-711). Position 714 is a phosphothreonine (Thr-714). Ser-715 is subject to Phosphoserine; by CK1 and PDPK1. 3 positions are modified to phosphoserine: Ser-720, Ser-727, and Ser-733. The residue at position 738 (Thr-738) is a Phosphothreonine.

In terms of assembly, interacts with MARK1, MARK2, MARK3 and MARK4. Interacts with SQSTM1 when polyubiquitinated. Interacts with PSMC2 through SQSTM1. Interacts with FKBP4. Binds to CSNK1D. Interacts with SGK1. Interacts with EPM2A; the interaction dephosphorylates MAPT at Ser-388. Interacts with PIN1. Interacts with LRRK2. Interacts with LRP1, leading to endocytosis; this interaction is reduced in the presence of LRPAP1/RAP. Polyubiquitinated. Requires functional TRAF6 and may provoke SQSTM1-dependent degradation by the proteasome. In terms of processing, phosphorylated at various serine and threonine residues in S-P or T-P motifs by proline-directed protein kinases (PDPK1, CDK1, CDK5, GSK3, MAPK) (a few sites per protein in interphase, more in mitosis), and at serine residues in K-X-G-S motifs by MAP/microtubule affinity-regulating kinase (MARK1, MARK2, MARK3, MARK4), causing detachment from microtubules, and their disassembly. Fetal Tau is much more phosphorylated than adult Tau. Phosphorylation at Ser-573 by BRSK1 and BRSK2 in neurons affects ability to bind microtubules and plays a role in neuron polarization. Phosphorylated by PHK. Dephosphorylation at several serine and threonine residues by the serine/threonine phosphatase PPP5C. Phosphorylation at Ser-204 by SGK1 mediates microtubule depolymerization and neurite formation in hippocampal neurons. As to expression, expressed in neurons. The larger forms (isoform tau-A and isoform tau-B) are preferentially expressed in the peripheral nervous system while the other are expressed in the central nervous system. Low amounts of the larger forms are also found in limited areas of the CNS.

The protein resides in the cytoplasm. It is found in the cytosol. Its subcellular location is the cell membrane. The protein localises to the cytoskeleton. It localises to the cell projection. The protein resides in the axon. It is found in the dendrite. Its subcellular location is the secreted. In terms of biological role, promotes microtubule assembly and stability, and might be involved in the establishment and maintenance of neuronal polarity. The C-terminus binds axonal microtubules while the N-terminus binds neural plasma membrane components, suggesting that tau functions as a linker protein between both. Axonal polarity is predetermined by tau localization (in the neuronal cell) in the domain of the cell body defined by the centrosome. The short isoforms allow plasticity of the cytoskeleton whereas the longer isoforms may preferentially play a role in its stabilization. The chain is Microtubule-associated protein tau from Rattus norvegicus (Rat).